The primary structure comprises 447 residues: Chromosomal replication initiator protein DnaA (447 aa).

The segment at 1–66 is domain I, interacts with DnaA modulators; that stretch reads MSNRIISILK…SKAIKEAYGK (66 aa). Residues 66–102 are domain II; the sequence is KNLDYEIVYETTEPEAFNKSNESYKGPLVKKKPLLIS. The domain III, AAA+ region stretch occupies residues 103-319; that stretch reads NLNANYTFEN…GVIIKLIVQS (217 aa). ATP is bound by residues G146, G148, K149, and T150. Residues 320-447 form a domain IV, binds dsDNA region; the sequence is SINKERIGAA…NTMATSSAAG (128 aa).

This sequence belongs to the DnaA family. In terms of assembly, oligomerizes as a right-handed, spiral filament on DNA at oriC.

Its subcellular location is the cytoplasm. Its function is as follows. Plays an essential role in the initiation and regulation of chromosomal replication. ATP-DnaA binds to the origin of replication (oriC) to initiate formation of the DNA replication initiation complex once per cell cycle. Binds the DnaA box (a 9 base pair repeat at the origin) and separates the double-stranded (ds)DNA. Forms a right-handed helical filament on oriC DNA; dsDNA binds to the exterior of the filament while single-stranded (ss)DNA is stabiized in the filament's interior. The ATP-DnaA-oriC complex binds and stabilizes one strand of the AT-rich DNA unwinding element (DUE), permitting loading of DNA polymerase. After initiation quickly degrades to an ADP-DnaA complex that is not apt for DNA replication. Binds acidic phospholipids. The chain is Chromosomal replication initiator protein DnaA from Kosmotoga olearia (strain ATCC BAA-1733 / DSM 21960 / TBF 19.5.1).